Reading from the N-terminus, the 730-residue chain is UvrABC system protein C (730 aa).

The GIY-YIG domain maps to 16–95 (AAPGVYKFRD…IKEFDPRFNV (80 aa)). The UVR domain maps to 208–243 (DKLVKDLEKRMQQASEDLDFETAARLRDDIGALRKA). Positions 678 to 730 (ARALPAAVGDDELDKESESSVTSADAPSAESGSGDEGSESRELSMPTTGPSAQ) are disordered.

This sequence belongs to the UvrC family. Interacts with UvrB in an incision complex.

Its subcellular location is the cytoplasm. The UvrABC repair system catalyzes the recognition and processing of DNA lesions. UvrC both incises the 5' and 3' sides of the lesion. The N-terminal half is responsible for the 3' incision and the C-terminal half is responsible for the 5' incision. The chain is UvrABC system protein C from Rhodococcus erythropolis (strain PR4 / NBRC 100887).